The following is a 183-amino-acid chain: SsrA-binding protein (183 aa).

The disordered stretch occupies residues 1-27; the sequence is MAKKATLVDHGAAKGKKKAQSKVSKKN. A compositionally biased stretch (basic residues) spans 13-27; sequence AKGKKKAQSKVSKKN.

This sequence belongs to the SmpB family.

It is found in the cytoplasm. Its function is as follows. Required for rescue of stalled ribosomes mediated by trans-translation. Binds to transfer-messenger RNA (tmRNA), required for stable association of tmRNA with ribosomes. tmRNA and SmpB together mimic tRNA shape, replacing the anticodon stem-loop with SmpB. tmRNA is encoded by the ssrA gene; the 2 termini fold to resemble tRNA(Ala) and it encodes a 'tag peptide', a short internal open reading frame. During trans-translation Ala-aminoacylated tmRNA acts like a tRNA, entering the A-site of stalled ribosomes, displacing the stalled mRNA. The ribosome then switches to translate the ORF on the tmRNA; the nascent peptide is terminated with the 'tag peptide' encoded by the tmRNA and targeted for degradation. The ribosome is freed to recommence translation, which seems to be the essential function of trans-translation. This is SsrA-binding protein from Corynebacterium kroppenstedtii (strain DSM 44385 / JCM 11950 / CIP 105744 / CCUG 35717).